A 142-amino-acid chain; its full sequence is Small heat shock protein IbpB (142 aa).

The 112-residue stretch at 26–137 folds into the sHSP domain; sequence TGESQSFPPY…APQRIAISER (112 aa).

It belongs to the small heat shock protein (HSP20) family. As to quaternary structure, homodimer. Forms homomultimers of about 100-150 subunits at optimal growth temperatures. Conformation changes to oligomers at high temperatures or high ionic concentrations. The decrease in size of the multimers is accompanied by an increase in chaperone activity.

The protein localises to the cytoplasm. In terms of biological role, associates with aggregated proteins, together with IbpA, to stabilize and protect them from irreversible denaturation and extensive proteolysis during heat shock and oxidative stress. Aggregated proteins bound to the IbpAB complex are more efficiently refolded and reactivated by the ATP-dependent chaperone systems ClpB and DnaK/DnaJ/GrpE. Its activity is ATP-independent. The polypeptide is Small heat shock protein IbpB (Citrobacter koseri (strain ATCC BAA-895 / CDC 4225-83 / SGSC4696)).